We begin with the raw amino-acid sequence, 714 residues long: Interferon-induced GTP-binding protein Mx2 (714 aa).

Residues 1-89 (MSMSYRALKF…QRSKGSENNL (89 aa)) are disordered. Polar residues-rich tracts occupy residues 61–70 (NNFNQLNLDP) and 79–88 (QQRSKGSENN). In terms of domain architecture, Dynamin-type G spans 115-386 (DLALPAIAVI…LIWHINKSLP (272 aa)). Residues 125–132 (GDQSSGKS) are G1 motif. 125-132 (GDQSSGKS) provides a ligand contact to GTP. A G2 motif region spans residues 150–152 (ITR). The tract at residues 224–227 (DLPG) is G3 motif. GTP contacts are provided by residues 224–228 (DLPGI) and 293–296 (TKPD). The G4 motif stretch occupies residues 293–296 (TKPD). The segment at 325–328 (KCRG) is G5 motif. Residues 622–713 (IVEIGVHLNA…ALYEFPHFKS (92 aa)) enclose the GED domain.

Belongs to the TRAFAC class dynamin-like GTPase superfamily. Dynamin/Fzo/YdjA family.

It is found in the cytoplasm. The protein resides in the nucleus. Functionally, interferon-induced dynamin-like GTPase with antiviral activity. The protein is Interferon-induced GTP-binding protein Mx2 (MX2) of Ovis aries (Sheep).